The sequence spans 266 residues: Indole-3-glycerol phosphate synthase (266 aa).

It belongs to the TrpC family.

It catalyses the reaction 1-(2-carboxyphenylamino)-1-deoxy-D-ribulose 5-phosphate + H(+) = (1S,2R)-1-C-(indol-3-yl)glycerol 3-phosphate + CO2 + H2O. Its pathway is amino-acid biosynthesis; L-tryptophan biosynthesis; L-tryptophan from chorismate: step 4/5. The sequence is that of Indole-3-glycerol phosphate synthase from Opitutus terrae (strain DSM 11246 / JCM 15787 / PB90-1).